We begin with the raw amino-acid sequence, 348 residues long: Farnesoic acid carboxyl-O-methyltransferase (348 aa).

Tyrosine 16 provides a ligand contact to S-adenosyl-L-methionine. Substrate-binding positions include tyrosine 16 and 19–23 (HSKYQ). S-adenosyl-L-methionine-binding positions include glycine 57, 57 to 58 (GC), asparagine 63, 94 to 97 (FNDS), 123 to 125 (SFF), and 140 to 142 (SYS). Residue 141–145 (YSLHF) coordinates substrate. The Mg(2+) site is built by asparagine 162, aspartate 247, and phenylalanine 249.

It belongs to the methyltransferase superfamily. SABATH family. Homodimer. Requires Mg(2+) as cofactor. Mostly expressed in leaves and, at very low levels, in roots, stems, flowers and siliques.

It catalyses the reaction (2E,6E)-farnesoate + S-adenosyl-L-methionine = methyl (2E,6E)-farnesoate + S-adenosyl-L-homocysteine. It carries out the reaction juvenile hormone III carboxylate + S-adenosyl-L-methionine = juvenile hormone III + S-adenosyl-L-homocysteine. Its pathway is sesquiterpene biosynthesis. Its activity is regulated as follows. Activated by Mn(2+) ions. Strongly inhibited by Cu(2+), Zn(2+), Fe(3+) and Fe(2+) ions. Moderately inhibited by Na(+) and Ca(2+) ions. Rapidly degraded at temperatures above 40 degrees Celsius. Its function is as follows. May catalyze the production of the insect juvenile hormone methyl farnesoate (MeFA) to trigger defense against insect herbivory. The polypeptide is Farnesoic acid carboxyl-O-methyltransferase (Arabidopsis thaliana (Mouse-ear cress)).